Here is a 660-residue protein sequence, read N- to C-terminus: MTNIIELPEVLANQIAAGEVVERPASVVKELVENAIDAKSSQITVEIEESGLKMIQVTDNGEGMSHEDLPLSLRRHATSKIKSQSDLFRIRTLGFRGEALPSVASISKITIKTATKEVTHGSLLIATGGEIETLEAISTPTGTKIKVENLFYNTPARLKYMKSLQAELAHIVDVVNRLSLAHPEVAFTLISDGRQLTQTSGTGDLRQAIAGIYGLNTTKKMLAISNADLDFEVSGYVSLPELTRANRNYMTILVNGRYIKNFLLNRAILDGYGSKLMVGRFPIVVIDIQIDPYLADVNVHPTKQEVRISKERELMALISTAISESLKEQDLIPDALENLAKSSTRHFSKPEQTQLPLQSRGLYYDPQKNDFFVKESAVSEKIPETDFYFGAVDNSVKVEKAELLPHSEEVIGPSSVKHASRPQNTFTETDHPNLDLKNRQKLSQMLNRLENEEKSVFPELDYFGQMHGTYLFAQGKDGLFIIDQHAAQERVKYEYYRDKIGEADSSLQQLLVPYLFEFSGSDFINLQEKMALLNEVGIFLEVYGHNTFILREHPIWMKEEEIASGVYEMCDMLLLTNEVSIKTYRAELAIMMSCKRSIKANHSLDDYSARNLLLQLAQCQNPYNCPHGRPVLINFSKADMEKMFRRIQENHTSLRELGKY.

Residues 414-433 form a disordered region; the sequence is SSVKHASRPQNTFTETDHPN.

The protein belongs to the DNA mismatch repair MutL/HexB family.

Its function is as follows. This protein is involved in the repair of mismatches in DNA. It is required for dam-dependent methyl-directed DNA mismatch repair. May act as a 'molecular matchmaker', a protein that promotes the formation of a stable complex between two or more DNA-binding proteins in an ATP-dependent manner without itself being part of a final effector complex. This is DNA mismatch repair protein MutL from Streptococcus pyogenes serotype M5 (strain Manfredo).